A 338-amino-acid chain; its full sequence is Nucleoid-associated protein PA14_59050 (338 aa).

Belongs to the YejK family.

It is found in the cytoplasm. Its subcellular location is the nucleoid. The sequence is that of Nucleoid-associated protein PA14_59050 from Pseudomonas aeruginosa (strain UCBPP-PA14).